An 892-amino-acid chain; its full sequence is Translation initiation factor IF-2 (892 aa).

2 disordered regions span residues 32-102 (LAQA…PGDA) and 114-300 (KAPE…KQAE). Polar residues predominate over residues 35–48 (AGSSDTKNSPASKA). The span at 139-166 (QEEKKESSEETSPERVEETLIIRTRTEP) shows a compositional bias: basic and acidic residues. The segment covering 200–211 (AASTEETTQQQP) has biased composition (low complexity). Over residues 212 to 224 (RQNDAASYNNKQQ) the composition is skewed to polar residues. Positions 225–238 (PSGTSSRPASSAPS) are enriched in low complexity. Over residues 252–276 (RGSERDRSKRSDESVKAFTGRDRYG) the composition is skewed to basic and acidic residues. The 170-residue stretch at 397–566 (IRSPIVAFMG…ALQAEVLELK (170 aa)) folds into the tr-type G domain. Residues 406–413 (GHVDHGKT) form a G1 region. 406-413 (GHVDHGKT) provides a ligand contact to GTP. The G2 stretch occupies residues 431-435 (AITQH). The interval 452–455 (DTPG) is G3. GTP is bound by residues 452-456 (DTPGH) and 506-509 (NKCD). The G4 stretch occupies residues 506–509 (NKCD). A G5 region spans residues 542–544 (SAK).

It belongs to the TRAFAC class translation factor GTPase superfamily. Classic translation factor GTPase family. IF-2 subfamily.

It localises to the cytoplasm. One of the essential components for the initiation of protein synthesis. Protects formylmethionyl-tRNA from spontaneous hydrolysis and promotes its binding to the 30S ribosomal subunits. Also involved in the hydrolysis of GTP during the formation of the 70S ribosomal complex. In Chlamydia trachomatis serovar A (strain ATCC VR-571B / DSM 19440 / HAR-13), this protein is Translation initiation factor IF-2.